The following is a 405-amino-acid chain: 4-hydroxy-3-methylbut-2-en-1-yl diphosphate synthase (flavodoxin) (405 aa).

Residues cysteine 297, cysteine 300, cysteine 343, and glutamate 350 each coordinate [4Fe-4S] cluster.

Belongs to the IspG family. [4Fe-4S] cluster serves as cofactor.

It catalyses the reaction (2E)-4-hydroxy-3-methylbut-2-enyl diphosphate + oxidized [flavodoxin] + H2O + 2 H(+) = 2-C-methyl-D-erythritol 2,4-cyclic diphosphate + reduced [flavodoxin]. Its pathway is isoprenoid biosynthesis; isopentenyl diphosphate biosynthesis via DXP pathway; isopentenyl diphosphate from 1-deoxy-D-xylulose 5-phosphate: step 5/6. Its function is as follows. Converts 2C-methyl-D-erythritol 2,4-cyclodiphosphate (ME-2,4cPP) into 1-hydroxy-2-methyl-2-(E)-butenyl 4-diphosphate. This Francisella tularensis subsp. tularensis (strain FSC 198) protein is 4-hydroxy-3-methylbut-2-en-1-yl diphosphate synthase (flavodoxin).